A 139-amino-acid chain; its full sequence is D-ribose pyranase (139 aa).

The Proton donor role is filled by histidine 20. Residues aspartate 28, histidine 106, and 128-130 (YAN) contribute to the substrate site.

This sequence belongs to the RbsD / FucU family. RbsD subfamily. As to quaternary structure, homodecamer.

It is found in the cytoplasm. The catalysed reaction is beta-D-ribopyranose = beta-D-ribofuranose. Its pathway is carbohydrate metabolism; D-ribose degradation; D-ribose 5-phosphate from beta-D-ribopyranose: step 1/2. Catalyzes the interconversion of beta-pyran and beta-furan forms of D-ribose. The sequence is that of D-ribose pyranase from Edwardsiella ictaluri (strain 93-146).